A 141-amino-acid polypeptide reads, in one-letter code: Large ribosomal subunit protein uL16 (141 aa).

The protein belongs to the universal ribosomal protein uL16 family. Part of the 50S ribosomal subunit.

Functionally, binds 23S rRNA and is also seen to make contacts with the A and possibly P site tRNAs. This chain is Large ribosomal subunit protein uL16, found in Aliarcobacter butzleri (strain RM4018) (Arcobacter butzleri).